The primary structure comprises 156 residues: Ribosome maturation factor RimP (156 aa).

The protein belongs to the RimP family.

It localises to the cytoplasm. Required for maturation of 30S ribosomal subunits. The sequence is that of Ribosome maturation factor RimP from Microcystis aeruginosa (strain NIES-843 / IAM M-2473).